We begin with the raw amino-acid sequence, 690 residues long: Adhesion G protein-coupled receptor L4 (690 aa).

The signal sequence occupies residues 1 to 19; it reads MKRLPLLVVFSTLLNCSYT. Positions 20-57 constitute an EGF-like 1 domain; that stretch reads QNCTKTPCLPNAKCEIRNGIEACYCNMGFSGNGVTICE. Residues 20 to 432 lie on the Extracellular side of the membrane; sequence QNCTKTPCLP…DYNILTRITQ (413 aa). Residue asparagine 21 is glycosylated (N-linked (GlcNAc...) asparagine). Intrachain disulfides connect cysteine 22-cysteine 33, cysteine 27-cysteine 42, cysteine 44-cysteine 56, cysteine 62-cysteine 75, cysteine 69-cysteine 84, and cysteine 86-cysteine 107. Residues 58–108 enclose the EGF-like 2; calcium-binding domain; sequence DDNECGNLTQSCGENANCTNTEGSYYCMCVPGFRSSSNQDRFITNDGTVCI. N-linked (GlcNAc...) asparagine glycosylation is found at asparagine 64 and asparagine 74. Asparagine 127, asparagine 177, asparagine 188, asparagine 249, asparagine 381, and asparagine 395 each carry an N-linked (GlcNAc...) asparagine glycan. Positions 244–419 constitute a GAIN-B domain; it reads TEFDTNSTDI…AILMSSGPSI (176 aa). 2 disulfides stabilise this stretch: cysteine 370-cysteine 401 and cysteine 389-cysteine 403. Residues 370–419 form a GPS region; sequence CAFWNYSPDTMNGSWSSEGCELTYSNETHTSCRCNHLTHFAILMSSGPSI. A helical transmembrane segment spans residues 433–453; the sequence is LGIIISLICLAICIFTFWFFS. Over 454–460 the chain is Cytoplasmic; it reads EIQSTRT. The helical transmembrane segment at 461–481 threads the bilayer; that stretch reads TIHKNLCCSLFLAELVFLVGI. At 482-499 the chain is on the extracellular side; the sequence is NTNTNKLFCSIIAGLLHY. A helical transmembrane segment spans residues 500 to 520; it reads FFLAAFAWMCIEGIHLYLIVV. Residues 521 to 532 lie on the Cytoplasmic side of the membrane; the sequence is GVIYNKGFLHKN. Residues 533 to 553 traverse the membrane as a helical segment; that stretch reads FYIFGYLSPAVVVGFSAALGY. Residues 554 to 573 lie on the Extracellular side of the membrane; it reads RYYGTTKVCWLSTENNFIWS. Residues 574–594 form a helical membrane-spanning segment; it reads FIGPACLIILVNLLAFGVIIY. At 595-618 the chain is on the cytoplasmic side; it reads KVFRHTAGLKPEVSCFENIRSCAR. Residues 619-639 traverse the membrane as a helical segment; sequence GALALLFLLGTTWIFGVLHVV. The Extracellular segment spans residues 640–646; that stretch reads HASVVTA. A helical membrane pass occupies residues 647–667; the sequence is YLFTVSNAFQGMFIFLFLCVL. Residues 668 to 690 lie on the Cytoplasmic side of the membrane; that stretch reads SRKIQEEYYRLFKNVPCCFGCLR.

This sequence belongs to the G-protein coupled receptor 2 family. Adhesion G-protein coupled receptor (ADGR) subfamily. As to quaternary structure, heterodimer of 2 chains generated by proteolytic processing; the large extracellular N-terminal fragment and the membrane-bound C-terminal fragment predominantly remain associated and non-covalently linked. Post-translationally, glycosylated. In terms of processing, proteolytically cleaved into 2 subunits, an extracellular alpha subunit and a seven-transmembrane subunit. In terms of tissue distribution, detected in the majority of epithelial cells in tumor and normal tissues. Expressed also in human umbilical vein endothelial cells.

The protein localises to the cell membrane. In terms of biological role, endothelial orphan receptor that acts as a key regulator of angiogenesis. This is Adhesion G protein-coupled receptor L4 from Homo sapiens (Human).